A 206-amino-acid polypeptide reads, in one-letter code: Methyltransferase-like 26 (206 aa).

This sequence belongs to the UPF0585 family.

The protein is Methyltransferase-like 26 of Danio rerio (Zebrafish).